Reading from the N-terminus, the 167-residue chain is Ribosome maturation factor RimP (167 aa).

Belongs to the RimP family.

Its subcellular location is the cytoplasm. In terms of biological role, required for maturation of 30S ribosomal subunits. The chain is Ribosome maturation factor RimP from Streptomyces griseus subsp. griseus (strain JCM 4626 / CBS 651.72 / NBRC 13350 / KCC S-0626 / ISP 5235).